A 436-amino-acid polypeptide reads, in one-letter code: Trigger factor (436 aa).

In terms of domain architecture, PPIase FKBP-type spans Gly-163 to Pro-248.

Belongs to the FKBP-type PPIase family. Tig subfamily.

The protein localises to the cytoplasm. The enzyme catalyses [protein]-peptidylproline (omega=180) = [protein]-peptidylproline (omega=0). Its function is as follows. Involved in protein export. Acts as a chaperone by maintaining the newly synthesized protein in an open conformation. Functions as a peptidyl-prolyl cis-trans isomerase. In Albidiferax ferrireducens (strain ATCC BAA-621 / DSM 15236 / T118) (Rhodoferax ferrireducens), this protein is Trigger factor.